A 93-amino-acid polypeptide reads, in one-letter code: UPF0358 protein YlaN (93 aa).

This sequence belongs to the UPF0358 family.

In terms of biological role, essential for cell growth and for normal cell shape. The protein is UPF0358 protein YlaN (ylaN) of Bacillus subtilis (strain 168).